The sequence spans 579 residues: Aspartate--tRNA(Asp/Asn) ligase (579 aa).

Residue Glu171 coordinates L-aspartate. An aspartate region spans residues 195 to 198; it reads QLFK. Arg217 contacts L-aspartate. ATP is bound by residues 217–219 and Gln226; that span reads RDE. His444 is a binding site for L-aspartate. Glu475 serves as a coordination point for ATP. L-aspartate is bound at residue Arg482. 527-530 contributes to the ATP binding site; that stretch reads GLDR.

This sequence belongs to the class-II aminoacyl-tRNA synthetase family. Type 1 subfamily. As to quaternary structure, homodimer.

Its subcellular location is the cytoplasm. It catalyses the reaction tRNA(Asx) + L-aspartate + ATP = L-aspartyl-tRNA(Asx) + AMP + diphosphate. In terms of biological role, aspartyl-tRNA synthetase with relaxed tRNA specificity since it is able to aspartylate not only its cognate tRNA(Asp) but also tRNA(Asn). Reaction proceeds in two steps: L-aspartate is first activated by ATP to form Asp-AMP and then transferred to the acceptor end of tRNA(Asp/Asn). The chain is Aspartate--tRNA(Asp/Asn) ligase from Thermotoga neapolitana (strain ATCC 49049 / DSM 4359 / NBRC 107923 / NS-E).